Here is a 320-residue protein sequence, read N- to C-terminus: o-succinylbenzoate synthase (320 aa).

Lysine 133 functions as the Proton donor in the catalytic mechanism. Residues aspartate 161, glutamate 190, and aspartate 213 each coordinate Mg(2+). The active-site Proton acceptor is lysine 235.

The protein belongs to the mandelate racemase/muconate lactonizing enzyme family. MenC type 1 subfamily. The cofactor is a divalent metal cation.

The enzyme catalyses (1R,6R)-6-hydroxy-2-succinyl-cyclohexa-2,4-diene-1-carboxylate = 2-succinylbenzoate + H2O. It participates in quinol/quinone metabolism; 1,4-dihydroxy-2-naphthoate biosynthesis; 1,4-dihydroxy-2-naphthoate from chorismate: step 4/7. Its pathway is quinol/quinone metabolism; menaquinone biosynthesis. Its function is as follows. Converts 2-succinyl-6-hydroxy-2,4-cyclohexadiene-1-carboxylate (SHCHC) to 2-succinylbenzoate (OSB). The protein is o-succinylbenzoate synthase of Salmonella typhi.